The following is a 159-amino-acid chain: MNIRRKNRLWIACAVLAGLALTIGLVLYALRSNIDLFYTPGEILYGKRETQQMPEVGQRLRVGGMVMPGSVQRDPNSLKVTFTIYDAEGSVDVSYEGILPDLFREGQGVVVQGELEEGNHILAKEVLAKHDENYTPPEVEKAMEANHRRPASVYKDPAS.

Topologically, residues 1 to 8 (MNIRRKNR) are cytoplasmic. The chain crosses the membrane as a helical; Signal-anchor for type II membrane protein span at residues 9-29 (LWIACAVLAGLALTIGLVLYA). Residues 30–159 (LRSNIDLFYT…PASVYKDPAS (130 aa)) are Periplasmic-facing. 2 residues coordinate heme: H130 and Y134. Residues 134-147 (YTPPEVEKAMEANH) show a composition bias toward basic and acidic residues. The interval 134–159 (YTPPEVEKAMEANHRRPASVYKDPAS) is disordered.

Belongs to the CcmE/CycJ family.

Its subcellular location is the cell inner membrane. Its function is as follows. Heme chaperone required for the biogenesis of c-type cytochromes. Transiently binds heme delivered by CcmC and transfers the heme to apo-cytochromes in a process facilitated by CcmF and CcmH. This is Cytochrome c-type biogenesis protein CcmE from Escherichia coli (strain SMS-3-5 / SECEC).